An 81-amino-acid polypeptide reads, in one-letter code: Neuronatin (81 aa).

The protein belongs to the neuronatin family.

Its function is as follows. May participate in the maintenance of segment identity in the hindbrain and pituitary development, and maturation or maintenance of the overall structure of the nervous system. May function as a regulatory subunit of ion channels. This is Neuronatin (NNAT) from Sus scrofa (Pig).